The primary structure comprises 307 residues: DDRGK domain-containing protein 1 (307 aa).

The Lumenal segment spans residues 1–2; the sequence is MD. Residues 3 to 23 form a helical membrane-spanning segment; the sequence is LILLVGIATALLLILITLYFL. The Cytoplasmic portion of the chain corresponds to 24–307; it reads QSKNAKTETK…TPVAAGESSA (284 aa). A disordered region spans residues 31-175; the sequence is ETKAAAQPQR…EADRLAKEER (145 aa). Residues 52–83 show a composition bias toward low complexity; it reads RRAQIARNQRNRLRQNQNAPAVAAAAAPAAAV. Residues 107–175 are compositionally biased toward basic and acidic residues; it reads LDEKMGAKKR…EADRLAKEER (69 aa).

Belongs to the DDRGK1 family. Interacts with Atg9; the interaction is transient.

Its subcellular location is the endoplasmic reticulum membrane. Substrate adapter for ufmylation, the covalent attachment of the ubiquitin-like modifier UFM1 to substrate proteins. Required for ufmylation of Atg9; protects the nervous system during aging, possibly by stabilizing Atg9 and supporting its function. The chain is DDRGK domain-containing protein 1 from Drosophila virilis (Fruit fly).